Reading from the N-terminus, the 316-residue chain is Beta-lactamase 3 (316 aa).

The N-terminal stretch at 1–29 (MFVLNKFFTNSHYKKIVPVVLLSCATLIG) is a signal peptide. C30 carries the N-palmitoyl cysteine lipid modification. C30 carries S-diacylglycerol cysteine lipidation. Positions 34-53 (NTQSESNKQTNQTNQVKQEN) are disordered. Low complexity predominate over residues 40–50 (NKQTNQTNQVK). Residue S95 is the Acyl-ester intermediate of the active site. E191 functions as the Proton acceptor in the catalytic mechanism. Substrate is bound at residue 257-259 (KTG).

The protein belongs to the class-A beta-lactamase family.

The protein resides in the cell membrane. It carries out the reaction a beta-lactam + H2O = a substituted beta-amino acid. This chain is Beta-lactamase 3 (blaZ), found in Bacillus cereus.